Reading from the N-terminus, the 348-residue chain is WW domain binding protein 1-like (348 aa).

The helical transmembrane segment at 42 to 62 threads the bilayer; sequence LWWFWLVWTVVIILSCCCVCH. Disordered regions lie at residues 111 to 253 and 306 to 348; these read VVNR…RRFT and CLSS…GSPS. Positions 134–155 are enriched in pro residues; sequence LPPPPQGGPPGGSPPGADPPPQ. Low complexity predominate over residues 156–177; the sequence is GSQGAQSSPLSGPSRSSTRPPS. Ser-177 carries the phosphoserine modification. A compositionally biased stretch (basic and acidic residues) spans 220–234; that stretch reads SECKEELLKDSRSER. The segment covering 331-348 has biased composition (polar residues); it reads NTINEQDSPNSQHSGSPS.

The protein resides in the membrane. The sequence is that of WW domain binding protein 1-like (Wbp1l) from Mus musculus (Mouse).